A 224-amino-acid chain; its full sequence is Artemin (224 aa).

The signal sequence occupies residues methionine 1–alanine 39. A propeptide spanning residues serine 40 to arginine 111 is cleaved from the precursor. Residues proline 43–alanine 124 are disordered. Over residues arginine 80 to proline 95 the composition is skewed to pro residues. Over residues alanine 96–serine 116 the composition is skewed to low complexity. Intrachain disulfides connect cysteine 127–cysteine 192, cysteine 154–cysteine 220, and cysteine 158–cysteine 222. N-linked (GlcNAc...) asparagine glycosylation is present at asparagine 206.

The protein belongs to the TGF-beta family. GDNF subfamily. Homodimer; disulfide-linked. Interacts with GFRA3 coreceptor and RET: forms a 2:2:2 ternary complex composed of ARTN ligand, GFRA3 and RET receptor.

It is found in the secreted. In terms of biological role, growth factor that supports the survival of sensory and sympathetic peripheral neurons in culture and also supports the survival of dopaminergic neurons of the ventral mid-brain. Acts by binding to its coreceptor, GFRA3, leading to autophosphorylation and activation of the RET receptor. Strong attractant of gut hematopoietic cells thus promoting the formation Peyer's patch-like structures, a major component of the gut-associated lymphoid tissue. The protein is Artemin of Mus musculus (Mouse).